The chain runs to 268 residues: Undecaprenyl-diphosphatase (268 aa).

8 consecutive transmembrane segments (helical) span residues 9–29 (VILGVVEGVTEFLPVSSTGHL), 47–67 (FDVLIQLGAILAILALYFAKL), 83–103 (FIIGVLVAFLPAAVIGAAAGS), 107–127 (LFLFNPWVVCFSLIVGGAVLL), 144–164 (FPVLMYFYIGCAQCVAMIPGV), 184–204 (AAEFSFFLAIPTMVGAFVYDL), 218–238 (IVAVGFVVSFITAIIVVKTFL), and 246–266 (FQLFAWWRVVVGTLGLIALAM).

This sequence belongs to the UppP family.

It is found in the cell inner membrane. The catalysed reaction is di-trans,octa-cis-undecaprenyl diphosphate + H2O = di-trans,octa-cis-undecaprenyl phosphate + phosphate + H(+). Catalyzes the dephosphorylation of undecaprenyl diphosphate (UPP). Confers resistance to bacitracin. The polypeptide is Undecaprenyl-diphosphatase (Rhodopseudomonas palustris (strain HaA2)).